We begin with the raw amino-acid sequence, 216 residues long: Ribosomal RNA small subunit methyltransferase G (216 aa).

Residues glycine 73, leucine 78, 124 to 125 (AE), and arginine 139 each bind S-adenosyl-L-methionine.

The protein belongs to the methyltransferase superfamily. RNA methyltransferase RsmG family.

It localises to the cytoplasm. Functionally, specifically methylates the N7 position of guanine in position 518 of 16S rRNA. In Paenarthrobacter aurescens (strain TC1), this protein is Ribosomal RNA small subunit methyltransferase G.